A 278-amino-acid polypeptide reads, in one-letter code: Non-heme chloroperoxidase (278 aa).

Positions 24–259 (PIVFHHGWPL…LKTYPGYSHG (236 aa)) constitute an AB hydrolase-1 domain. Catalysis depends on residues Ser-97, Asp-229, and His-258.

It belongs to the AB hydrolase superfamily. Bacterial non-heme haloperoxidase / perhydrolase family. As to quaternary structure, homodimer.

Its function is as follows. Chlorinates and brominates suitable organic compounds. Involved in the biosynthesis of the antibiotic pyrrolnitrin. This chain is Non-heme chloroperoxidase (cpo), found in Burkholderia pyrrocinia (Pseudomonas pyrrocinia).